The following is a 1185-amino-acid chain: Chromosome partition protein Smc (1185 aa).

34–41 (PNGSGKSN) serves as a coordination point for ATP. 2 coiled-coil regions span residues 174–376 (WRRS…EKDI) and 412–526 (ENIV…KLDV). The 111-residue stretch at 534–644 (VGEIISLQKK…CENIDNAFEI (111 aa)) folds into the SMC hinge domain. Residues 679–1039 (NIIGRKREIE…IDAMTEKMKG (361 aa)) adopt a coiled-coil conformation.

It belongs to the SMC family. In terms of assembly, homodimer.

Its subcellular location is the cytoplasm. Required for chromosome condensation and partitioning. This Clostridium kluyveri (strain NBRC 12016) protein is Chromosome partition protein Smc.